The sequence spans 138 residues: Putative nickel-responsive regulator (138 aa).

Positions 78, 89, 91, and 97 each coordinate Ni(2+).

The protein belongs to the transcriptional regulatory CopG/NikR family. Requires Ni(2+) as cofactor.

Functionally, transcriptional regulator. The sequence is that of Putative nickel-responsive regulator from Pyrococcus horikoshii (strain ATCC 700860 / DSM 12428 / JCM 9974 / NBRC 100139 / OT-3).